The sequence spans 381 residues: Homoserine O-succinyltransferase (381 aa).

The AB hydrolase-1 domain occupies 45-360 (NAVLVCHALN…PHGHDAFLLD (316 aa)). The active-site Nucleophile is serine 151. Arginine 221 provides a ligand contact to substrate. Residues aspartate 321 and histidine 354 contribute to the active site. Aspartate 355 is a substrate binding site.

Belongs to the AB hydrolase superfamily. MetX family. As to quaternary structure, homodimer.

It is found in the cytoplasm. It carries out the reaction L-homoserine + succinyl-CoA = O-succinyl-L-homoserine + CoA. The protein operates within amino-acid biosynthesis; L-methionine biosynthesis via de novo pathway; O-succinyl-L-homoserine from L-homoserine: step 1/1. In terms of biological role, transfers a succinyl group from succinyl-CoA to L-homoserine, forming succinyl-L-homoserine. In Burkholderia mallei (strain NCTC 10247), this protein is Homoserine O-succinyltransferase.